Reading from the N-terminus, the 437-residue chain is Protein farnesyltransferase subunit beta (437 aa).

PFTB repeat units lie at residues 123 to 164 (ATDV…CIIG), 174 to 215 (REKL…SLTN), 222 to 263 (FEGT…VILK), 270 to 312 (LKSL…PLLH), and 332 to 374 (QQAL…SIAQ). Residues 248–251 (HGGY) and 291–294 (RCNK) contribute to the (2E,6E)-farnesyl diphosphate site. Residues Asp297 and Cys299 each contribute to the Zn(2+) site. Residue 300–303 (YSFW) coordinates (2E,6E)-farnesyl diphosphate. His362 serves as a coordination point for Zn(2+). Thr436 bears the Phosphothreonine mark.

This sequence belongs to the protein prenyltransferase subunit beta family. Heterodimer of FNTA and FNTB. Zn(2+) is required as a cofactor.

The enzyme catalyses L-cysteinyl-[protein] + (2E,6E)-farnesyl diphosphate = S-(2E,6E)-farnesyl-L-cysteinyl-[protein] + diphosphate. In terms of biological role, essential subunit of the farnesyltransferase complex. Catalyzes the transfer of a farnesyl moiety from farnesyl diphosphate to a cysteine at the fourth position from the C-terminus of several proteins having the C-terminal sequence Cys-aliphatic-aliphatic-X. The protein is Protein farnesyltransferase subunit beta (FNTB) of Bos taurus (Bovine).